An 8384-amino-acid chain; its full sequence is MKLILWYLVVALWCFFKDVEALLYRQKSDGKIAASRSGGFSYGSSSSGDLDRKKPLFSLEFGSPGETEDKSRQRQDAGSPKSEDTPAGGFFNSSSSSGDSDRTKPFFSLGLGAPGKAEDKSGDSQDAGGSKSEDTPPGGFFYGSSSSGDSDKKKPLFSFEFGATGEDEDKSRERWDAGNSRSEDSPADSTNTRYGAGFSSSGASLDVGFGWGISDEKGLEVSKADGRETRGSGSAGGETIVFGPDAGSSVGTGSSGLKLGAGKGDAAFGFEVSDSNSFGDTGISSKTVEGNQTSSSGGSVSIDLGDTSFRSENQFVGGGSLNSISNLWDSGQEGFGINEIGGNGMSGSVSAEAGFKGFGSDSSSSGDSSARNGFENSSGISEDSGVILGSSDQHEVELSRTGGNRKRSSDPDEAGNLSPGSDVSDSGGNTWSSDSGSGGGGVTSSSEYSTSGPLNTPEKGSHIPEATPKYSETNAIIGEISTWSKGAYKSFNGRIFFFESSCPYTFCRHCIESGGDFNIEIKRNNDSEIEKITVLIDNNDVSIFGDTILVNGESVQIPYNNKLIHIKKYGEHNVLNSRRGILTLMWDKNNKLSLTLHKQYPTCGLCGNFNSTPGQDINEHIANSKIPGDCPNAVGKSYEVCEDGIQHCNKIIGTYFEKCGKVAALSNDYKMICIDEYCQTRDKTSTCDTYSELSRLCASDGPGTFESWRSDSDVVCGTQRCPEQHIYKECGPSNPATCSNVAPFQDSECVSGCTCPEGYLLDDIGEKGKCVLKAECPCESSGTVYQPGEVREGPCGSQCTCQDAKWSCTEALCPGRCKVEGSSLTTFDGVKYNFPGNCHFLAVHNEDWSISVELRPCPSGQTGTCLNSVTLLLNSSVPVDKYVFNSDGTVTNDKIRNQGYYYSDKIQIFNASSSYLQVETYFHVKLQIQIVPVMQLYVSMPPNQFTDTVGLCGSYNNKAEDDFMSSQNILEKTSQAFANSWEMMSCPKGNPSSCISIEKEKFAERHCGILLDSSGPLASCHPIVNPKPYHEECKKYTCTCENSQDCLCTILGNYVKACAEKETYIVGWRTGLCEHSCPSGLVFKYNVKACNSSCRSLSERDRSCDVEDVPVDGCTCPDAMYQNNEGNCVLKSQCDCYINDEVMQPGKLIHIDDNKCVCRDGILLCQIPIDLTLQNCSGGAEYVDCSDPKAQRRTNRTCSTRNIPVFDENLPCKRGCFCPEGMVRNSKGICVFPNDCPCSFGGREYDEGSVTSVGCNECTCIKGSWSCTQNECQTICHIYGEGHVRTFDGKSYSFDGLCQYSFLEDYCGHENGTFRILTESVPCCEDGLTCSRKIIVAFQDQNIVLQDGKVTAVKSTESKKCELNANAYSIHTVGLYLILKFQNGIIVIWDKNTRLSVILDPNWNGKVCGLCGNNNGDLKDDFTTRYSSVASGALEFGNSWKTSQECSDTVAQTFPCDSNPYCKAWAVRKCEILRDSTFRDCHNKVDPSAYHDACIEEACACDMEGKYLGFCTAVAMYAEACSAVGVCVSWRKPNLCPVYCDYYNAPGECRWHYEPCGTVTAKTCKDQLVGQKFSSLLEGCYAKCPDSAPYLDENTMKCVSLSECSCFYNDVIPAGGVIEDNCGRTCYCIAGQLECSETAPTNSTFAVSTTTATTILSTGAAITLVTGGPSTAASIPAITTSSSETTGTTLGPLTEPFTTGITETSVPIISTSGNAGMTGVVSPTVTGASGMAGTTGGVDAATTGAASENTSERAGTPRVSGETPAVGGGSTPGEAGPGATVSGSTGVSAGSITASPGASATSSESSKSGTTGPSVGGKTGATSSEATSSEGMSGVTGQSLGSTAGSDSEITAKTSFTGSSPPGKLTRPSPGSPGHFSGGTTEWGNVATTGAAGENTSGALGSTEGSVEATTSAGSGNTAGTSGTGDTGPGNTAVSGTPVVSPGATPGAPGSSTPGEADIGNTSFGKSGTPTVSAASTTSSPVSKHTDAASATAVTISGSKPGTPGTPGGATSGGKITSGWSSSGTSTGASNTPGATGSSTGQTDTSGPSAKVTGNYGQSSEIPGTIKSSSDVSGTMGQSDTTSGPSVAVTRTSEQSSGVTVASEPSVGVSGTTGPLAEISGTTRPLVSGLRTTGSSAEGSGTTGPSSRESVTTRPLAEGSGTSGQSVTGSRATGLSATELGTTVSFTGGLGTSRSSARETRTTGPSADGSGTTGPSVVRSGTTRLSVGVTRATESSPGVTGTTTPSAEESRTTGPSVLVTGTTGQSGQGSGTTGKSFIESGPSVVGSGTTGPTSAGLGTTAPSTRRSSTTKPSVGRTGTTGQSGAESGTTEPSARVAGVTGTSAEVSGRIEPSATESSTSRPLGETTGTTIPSMEGSEATGPSVIGSETTRLSVIGSGTTGTSSGGSGATRSSGGGMGTTGQSTARSETTGPLFGLTGTFGQSATVTGTSSNSAGVTTPEKSPGVAMTTGLLVEGSATTQPRILESETTESSAGVIVTSGQSARVTGATGPSAGETGTTEPSTEGSVAAVLFVIGSETTRPLDIGSGTTGTLSGGSSTTRSSDGTTGTTRKSTARSETTGLSGLTGTSGQLAGVTGTSSKSAGVTVTSEKSAGVAVITGSFVERPVTTGPPLLESETTRPSGGVTVTSGQSARVTETVGASAGVTGTTGPSTEGSGATGPSVVGSGTTRPLAGESGTTESSAGVTGTRPSSSRESATTGPSDEGSGTTGLSAGVTVTSGQSVRKTGTTGAPAGVTETTRPSVVKSGTTGPSVIGTRTTGTSSGGSGATRSSGGETETTGQSAVKSGTTESFTRLTRTSGQSAGMTGTSAQSAGVALTSPFVEGLVTTGSSTVGLETTRPSAVGSGKTGPPVVKAQTTGPSAGVTVTSGQSARMTGASGPSVGVTGTTGPASKGLGTIRPSVVGLETTELSAEGSGTTGPPIVGETTVPSAGVTVTSGYSDRVTGATEPLAGVTGTIKPSVAGSVTTGPSVTGVETTAKTTSGGLSTTISSVGGTGTTGQSPERSGTTGPFTGLTGTSAQSAGVTMTSIQSAGVLVTTGLNVDGLGTTGKALIGSGTTGLSAEATGTIGPSTEGLEKTGPSITGSGTTRPLVTESWTAGTSSGGHSTTSPSVRGTETTGQSAAESVTTGPVTGYTETSGPSAGVTVTPRQSPTVTQTTGSSAAVSGTTVQSLTVSGTTRPSSGQTEITGSSVKESGTTESSAVRSGTTGPTAGVTGTNGPSSAGVTGITGSSPGVTGTTGSSPGVTGTTGSSARSGTSIPSVGKTGTTRTSVEESRTTRPSAGITGTNGLSAEVTGTTGPLAGVTGTTGPSAGVTRTTGLSAGETGTTGLSPGVTRTTRSSAGLTGKTGLSAGVTGKTGLSAEVTGTTRLSAGVTGTTGPSPGVTGTTGTPAGVTGTTELSAGVTGKTGLSSEVTETTGLSYGVKRTIGLSAGSTGTSGQSAGVAGTTTLSAEVTGTTRPSAGVTGTTGLSAEVTEITGISAVVTGTTGPSAGVTETTGSSAGVAGTTRLSAGVTGITGLSAGVTGTTGLSTEVTGTTGPSAGATGTTGLSVGVTGITGLSDVVTETTGSSARSGTGIPSVGETRTTSTSVEESRTTRPSAGIMGTNGLPAEVTGTTEPLAGGTGTTGILAGVTGTTGLSAGETGKIGSSAGVTGKTGSSARVTGKTGPSAEVTGKTGLSAGVTGTTGLSPGVTGTSGLSAEVTGTTGPSAEATGLPGVSAGVTGTTGSLAGGTGTIGLSAGVTGTTGSSAGVTGTTGLSAGVTGIAGLSAGVTGITGPSAGVTGTTTVSAGVTGTTGLSAEATEITGLSAGVTGTTGLSAGVTETIRLSAGVTGTIRSSAGVTGITGLSAGVTGTTGPSAGVTGSTGLLAGVTETTGQSAKVTGTTGQSVGVTGTTRSSGGVTGITGLSAGVTGTNGLSAVTGMTGLSAEVTGTTGLSVGVTGIAGLSAGVTGITGPSAGITGTTTISAGVTGTSGLSAEATGITGLSAGVTGKTGLSAGVTETIGLSAEATGTIGSSPGVTGTTGSSTGVTGITGLSAGVTGTTGLSTEVTGTTGPSAGVTRTTGLSAGVTGITGLSAIVTETTGSSARSGTSIPSVGETGTTRTSVEESRTTRPSAGITGTNGLSAEVTGTIGPLAGGTGTTGLSAGVTGTVGSSAVVTGTTGLSAGVTGTTGPSAEETGATGPSAEVTETTGPSAGVTGTGRLSAEVTGTTGPSAEVTGLPGESAEVTGTIGSPAGVTGTTQLSAVVTGITGLSAEVTGTTGLSAGVTGITGLSAEVTRTTGLSAGVTGTIGLSAGVTGTTRPSAGVTGTTGQSAEVTGTTEPSAGLTETTGSSTGVTGATGPLAGVTGTTGISTEVTGTTGPSARVTGTTVLSAGVTGITGLSAIVTETTGSSARSGTSTPSVGETGTTRTSVEESRATRPSAGITGTNGQSAEVTWITGPLAGVTGTTGISAGVTGTTGLSAGVTGTIGSSAVVTGINGLSAGVTGTTGPSAEETGATGPSAEVTGTTGPSAEETGATGPSAEVTGTTGPSGGVTGTNGLSAEVTGTTGPSAEVTGLPGVSAGVTGTIGSPAAVTGTIRPSAVVTGITGLSAEVTGTTGLSAWVTGIAGLSAGVTETIGSSAGVTGTNGLSAEATGTTGPSAGVTGTTGLSAGVTGTAGLSARVTESTGLSAGVTGTTGLSAGVTGTTGPSAGITGTNGLSAEVTGTTGPLAGVTGTIGLSAGVTGIAGLSAGVTESTGLSAGVTGTIRSSAVVTGINGLSAGVTGTTGPSAEETGATGPSAEVTGTTGPSGGVTGTSGISAEVTGTTGPSAEVTGLPGVSAGVTGTIGSPAAVTGTTRPSAVVTGISGLSAEVTGTTGLSAGVTETIGSSAGVTGTNGLSAEATETTGPSAGVTGTTGLSAGVTGTTGPSAGIAGTNGLSAGVTGTTGLSARVTESTGLSAGVTGTIGSSAVVTETTRLSSGVTGTIGPSAEETGATGLSAEVTGTTGSLAEVTGTTGLSAGVTGTIGSSAVVTGTTGLSAGITGTNGLSAEVTGTAGPLAGVTGTTGLSAGVTGTTGLSAGVTETTGQSAGVTESTGLSPGVTGTIGSSAVVTGIKGLSAGVTGTTGPSAEETGATGPSAEVTGTTGPSGGVTGTSVLSVEVTGTTGPSAEVTGLPGVSAGLTGTIGSPAAVRGTTWPSAVVTGISGLSGEVTGTTGLSAGVTGIGGLSAGVTGTIGSSAGVTGTNALSAEATGTTGPSAGVTGTTGLSAGVTGTTGLSAGVTGTIRSSAVVTETTGLSAGVTGTTGPSAGIAGTNGLSAEVTGTTGLSAGMTGTTGLSARVTESTGLSAGVTGTIGSSAVVTETTRLSAGVTGTIGPSAEETGATGLSAEVTRTTGSLAGVTGTTGPSAVVTGKTELSAEVTGTTELSAEVTEKTGPSAEVTGKTGLSAGVMETTGPSAEVTGTTGSSAGVTGTTGPSAGVTGTTGPSAEATGLPGVSAGVTGTIGSPAGVTGTARLSAVVTGISGLSAEVTGTTGLSTGVTGIAGHSAAVTGITRPSAGVTGTTTVSAGVTGTIGLSAEATGITLPSAGVTETTGLSAGVTETIGLSAGVTGTIGSSAGVTEITGLSAGVTGTTGPSAGVTGSTVLSAGVTATTGQSVGVTGTTGPSAGVTGTTGLSAGVTGIAGLSAGVTGITGPSAGVTGTTTVSAGVTGTTGLSAEATEITGLSAGVTGTTGLSAGVTGIAGLSAGVTETIGSSAGVTGTNGLSAEATGKTGPSAGVTGTTGLSAGVTGTTGLSAGVTETIGLSAGVTGTIGSSAGVKGTTGQSAEVTGATGQSVGVTGTTRSSGGVTGITGLSAGLRGTTVSSAKAGTSIPLTGKTGTTRTSVEESTTTGPSAGITGTNGLSAEMTGTNELSAGVTGTIGSSAGVTGTTGLSVEATVTTGLSAGVTGTTVPLAGVTWTPGPSAGVTGIAALSAGVTGKSGLSAGVTGKTGLSAGVTGTTGPSAEATGKTGLSAGVTGITGPFAEVTGTTGLSAGVIGTTGSSAEVTGITGLSAGVTGKTRSSAGVTGTTGLSAKSGTSIPSAGKTGTTKTSVEESRTTRPSAGITATTGVPAATSPGAEGESIASTSVATGAIPRSTIAPGSTTTGTTGVTTGTTLAPRSFNIGTSGGISGKTLKPGSYVSEATTATGTPGAGPSGGTTISSPEVSTISEVSNTGITGVGSETSIETGISNTATTGVAPGTTLAPGSSSTEATTSIGGSASTRGGIATEATGSTRGVRTTGSEAPEGTSGEFSGTTISSGGFHTEATTLTGGRGSIGTESRAESTTSLPQSAKTRGGILTEATSSTGRIRATGSEAPGGTSRKFSGTTISSGGSHTEATTLAGGRDSTESEFRTATIGVVPATTVAPGSSKTEATTFLGVSGTTSVGRATGATTSIAGSDTSQAEHPGGTSGEFPGTTITSGDSHTEATALTGSRGSIGTESTVETTTYIGESGTTRGGLATATTGAFSGKTLEPGNDNTEATGSTGGIRATRTEAPGGTSGEFPGTTFTSGGSHTEATTFTGGKGSTGTESRAATTRAAPGTTLVPGSSNTGATASPGGSATTRGRITTATTGAFSGKTLESENDNTEATSSTRGVRTTRSEAPGGTSGEFPGTRITSGGSYTATTRAAPGTTLAPGSSNTGATASLGGSAMTRGRITTATTGAFSGKTLEPGNNNTEATSSTRGVRTTRSEAPGEATTLTGDRSSTGSESRTATTGVAPGTTVAPGSSKTEATTFLGVSGTTNIGRATGATTSIVGSDTSQAERPGGTTVVSPGASSTSQSSRPGTSVTPDSSASESETVTTKEFSGTTAISRTSHTGTPAASGGQATGSLTATTGVAPGTTVAPGSSNTEATTSVGERETTKAEIITGDTGELSGTTIISENSTTAGITAATGKQAGTSEVAPSTTVAPGSFSTAATTSPGASGTTGVTTTTKTTTSLGGSGTTGAEIKSATTGAPGSRTGTAGVPSATTVSPGSSNSEATTSVGESGKTGAETITEATTSTEGTGTSGTGFKTGTSEVAPATTVAPGSFSTAATTSPGASGMTGVTTTTKTTTSLGGSGTTGAKIKLVGTTTTAPESRTAGVPSGTRVTPGSSNSEATTSVEESRITRAEVITEATTFSGGSGATRAGLPRGTTGEFSGTNFISGSSNTEATTSTEGTGTSGTGFKIAGITSAPGKQAGTSGVSLATTVAPGSFSTATTSSGASGITRAGPTSETTTSLGGSGTTGAEIKSAAVPSGTTVAPGSSNSEATTSVGENGKTRGEIITDTTEGTSGKVLEPGSAHTEATTFPGGSGTTRAGPPGGTTGELSRMTIIPGSSNTEATTSTKGTGTSGTGFKTGTSWVAPGTTVSPGSFSTATISPGASRTTGAAPAAETTTSLEGGGTTGAEIKSGATSGVPGSKTGTAGVPSATTIAPGSSNSEATTSLGESGKTRVETITGTTEGKTLAAGSAHTEATTFSGGSGSTRAGPLGGASGTSGGYVPGRETEPTTSIEETGTSRTIFKTVGITSAPGRQAGTSVVAPSTTVAPGSFSTAATTSPGASGMTGVRTTSKTTTSLGGTGTTRTEIKSGATTGAPGIKTDIMGESSRTTILSGSSNTEATNSIEETGTSGTGFKTAGITAAPGKQAGTSGVAPGTTVAPGSFSTAATTSPGASGVTGTGPTAETTTFLGGSSTTGAEIKSGATTGAPGSKTGTAKVLSGTTVASGSSNSEATTFSGITEAVTVPSKNGSMTTALGSQLSSSQTVIPGSSGTISHTTVAPGSSVTGTTTGASDDQVTGSKTGTTGVALSTTVAPGSSSTEATTSTGVHRTTVVGQKTGATTRGSAKQGTRSTIEATTSFRGTGTTGSGMNTGTTGVVSGNTISPSSFNTEATSGTSERPNPGSEIGTTGIVSGTTVAPGSSNTEATTSLGNGGTTEAGSKIVTTGITTGTTIVPGSFNTKATTSTDVGVATGVGMATGITNIISGRSQPTGSKTGYTVTGSGTTALPGGFRTGNTPGSTGVTSSQEGTTVVSSGITGIPETSISGPSKEASDKTTAPGPPTTVTASTGVKETSETGVQTGSTLVTAGVPTRPQVSQPETTVVATREVETENKTECLASLPPAPVCHGPLGEEKSPGDIWTANCHRGTCTDAKTIDCKPEECPSPPTCKTGEKLVKFQSNDTCCEIGYCEPRTCLFNNTDYEIGASFDDPSNPCVSYSCKDTGFAAVVQDCPKQTWCAEANRIYDSKKCCYTCKNNCRSSLVNVTVIYSGCKKRVQMAKCTGECEKTAKYNYDILLLEHSCLCCREENYELRDIVLDCPDGSTIPYQYKHITTCSCLDICQLYTTFMYS.

The signal sequence occupies residues 1–21 (MKLILWYLVVALWCFFKDVEA). Disordered regions lie at residues 33 to 197 (AASR…YGAG), 222 to 247 (SKAD…PDAG), 279 to 305 (GDTG…IDLG), and 332 to 467 (QEGF…PEAT). Composition is skewed to low complexity over residues 35–48 (SRSG…SSSG) and 88–98 (GGFFNSSSSSG). Over residues 169-184 (DKSRERWDAGNSRSED) the composition is skewed to basic and acidic residues. Residues 187-197 (ADSTNTRYGAG) show a composition bias toward polar residues. Residues 279 to 299 (GDTGISSKTVEGNQTSSSGGS) show a composition bias toward polar residues. Low complexity predominate over residues 359–369 (GSDSSSSGDSS). The span at 370 to 381 (ARNGFENSSGIS) shows a compositional bias: polar residues. Composition is skewed to low complexity over residues 424–435 (SDSGGNTWSSDS) and 443–452 (TSSSEYSTSG). 3 VWFD domains span residues 478 to 649 (GEIS…QHCN), 815 to 995 (GRCK…SSCI), and 1274 to 1447 (TICH…QECS). Cystine bridges form between Cys-502–Cys-648, Cys-817–Cys-952, Cys-838–Cys-994, Cys-857–Cys-865, Cys-1276–Cys-1411, Cys-1298–Cys-1446, Cys-1307–Cys-1408, and Cys-1323–Cys-1330. Disordered regions lie at residues 1680–1699 (TSSS…PFTT), 1732–2464 (AGTT…KSPG), 2484–2526 (LESE…TEGS), 2540–2827 (RPLD…MTGT), 2850–2917 (STVG…LGTI), 2984–3027 (VTTG…SGTT), 3075–3368 (GTTG…GKTG), 3386–3428 (TTRL…GKTG), 3585–3628 (ETTG…TNGL), 3667–3736 (GSSA…TGLP), 4105–4147 (TGSS…NGLS), 4187–4251 (SAGV…AEVT), 4315–4390 (GLSA…SARV), 4414–4455 (TGSS…TNGQ), 4510–4583 (TGTT…TGLP), 4790–4843 (TGTT…TGLP), 4895–4930 (SSAG…AGVT), 5130–5161 (TGTT…GVTG), 5429–5452 (VTGT…VTGK), 5464–5494 (GPSA…GTTG), 5880–5918 (GTSI…SAEM), 6069–6403 (TGKT…STES), 6440–6918 (GRAT…ETTK), 6953–7223 (GTSE…TGFK), 7250–7749 (SFST…SKTG), 7783–7975 (KNGS…EAGS), and 8020–8133 (SGRS…VSQP). Low complexity-rich tracts occupy residues 1732–1746 (AGTT…TGAA), 1772–1813 (PGEA…TTGP), and 1820–1833 (GATS…EGMS). Over residues 1835–1860 (VTGQSLGSTAGSDSEITAKTSFTGSS) the composition is skewed to polar residues. The span at 1868–1879 (PSPGSPGHFSGG) shows a compositional bias: low complexity. A compositionally biased stretch (polar residues) spans 1880–1905 (TTEWGNVATTGAAGENTSGALGSTEG). Residues 1909 to 1921 (ATTSAGSGNTAGT) are compositionally biased toward low complexity. A compositionally biased stretch (polar residues) spans 1950–1968 (GSSTPGEADIGNTSFGKSG). Low complexity-rich tracts occupy residues 1969-1983 (TPTV…SPVS) and 2013-2049 (GGKI…SGPS). Residues 2055–2100 (NYGQSSEIPGTIKSSSDVSGTMGQSDTTSGPSVAVTRTSEQSSGVT) are compositionally biased toward polar residues. Low complexity-rich tracts occupy residues 2132 to 2147 (TTGS…GPSS) and 2159 to 2170 (GSGTSGQSVTGS). 2 stretches are compositionally biased toward polar residues: residues 2171–2186 (RATG…TVSF) and 2209–2225 (GSGT…TTRL). Low complexity-rich tracts occupy residues 2233–2246 (TESS…TTPS) and 2280–2313 (SGPS…TKPS). An approximate repeats of G-V-T-G-T-T-G-P-S-A region spans residues 2238-6086 (GVTGTTTPSA…GVTGTTGLSA (3849 aa)). Polar residues-rich tracts occupy residues 2316–2332 (RTGT…TTEP) and 2354–2372 (ATES…TTIP). Residues 2403-2419 (SSGGSGATRSSGGGMGT) show a composition bias toward gly residues. Residues 2420 to 2441 (TGQSTARSETTGPLFGLTGTFG) show a composition bias toward low complexity. The segment covering 2442-2460 (QSATVTGTSSNSAGVTTPE) has biased composition (polar residues). Composition is skewed to low complexity over residues 2512-2526 (SAGE…TEGS), 2545-2571 (GSGT…TTRK), and 2578-2589 (TTGLSGLTGTSG). Polar residues-rich tracts occupy residues 2595 to 2610 (TGTS…TSEK) and 2638 to 2653 (TRPS…QSAR). Over residues 2654–2681 (VTETVGASAGVTGTTGPSTEGSGATGPS) the composition is skewed to low complexity. 2 stretches are compositionally biased toward polar residues: residues 2695–2748 (SGTT…TGTT) and 2755–2770 (TETT…TTGP). Positions 2787-2799 (ATRSSGGETETTG) are enriched in low complexity. 3 stretches are compositionally biased toward polar residues: residues 2800 to 2827 (QSAV…MTGT), 2850 to 2859 (STVGLETTRP), and 2874 to 2892 (AQTT…QSAR). The span at 2894-2910 (TGASGPSVGVTGTTGPA) shows a compositional bias: low complexity. Over residues 2984 to 2998 (VTTGPSVTGVETTAK) the composition is skewed to polar residues. A compositionally biased stretch (low complexity) spans 2999-3027 (TTSGGLSTTISSVGGTGTTGQSPERSGTT). Residues 3099–3109 (PSITGSGTTRP) are compositionally biased toward polar residues. Residues 3114 to 3130 (SWTAGTSSGGHSTTSPS) are compositionally biased toward low complexity. Over residues 3131 to 3159 (VRGTETTGQSAAESVTTGPVTGYTETSGP) the composition is skewed to polar residues. A compositionally biased stretch (low complexity) spans 3172–3188 (TVTQTTGSSAAVSGTTV). Positions 3189-3224 (QSLTVSGTTRPSSGQTEITGSSVKESGTTESSAVRS) are enriched in polar residues. Low complexity predominate over residues 3225 to 3277 (GTTGPTAGVTGTNGPSSAGVTGITGSSPGVTGTTGSSPGVTGTTGSSARSGTS). Polar residues-rich tracts occupy residues 3303 to 3317 (ITGT…TGTT) and 3324 to 3362 (TGTT…SSAG). Over residues 3390-3417 (SAGVTGTTGPSPGVTGTTGTPAGVTGTT) the composition is skewed to low complexity. Polar residues-rich tracts occupy residues 3702–3728 (VTGT…TTGP) and 4105–4116 (TGSSARSGTSIP). A compositionally biased stretch (low complexity) spans 4117–4126 (SVGETGTTRT). Residues 4320–4346 (VTGTTRPSAGVTGTTGQSAEVTGTTEP) show a composition bias toward polar residues. 2 stretches are compositionally biased toward low complexity: residues 4347-4385 (SAGL…GTTG) and 4414-4426 (TGSS…STPS). Low complexity-rich tracts occupy residues 5469–5494 (VTGT…GTTG) and 5889–5903 (TGTT…TTTG). 3 stretches are compositionally biased toward polar residues: residues 5908-5918 (ITGTNGLSAEM), 6071-6103 (KTRS…TTKT), and 6111-6121 (TRPSAGITATT). A compositionally biased stretch (low complexity) spans 6156–6168 (TTTGTTGVTTGTT). Polar residues-rich tracts occupy residues 6217–6248 (EVST…TATT) and 6257–6275 (APGS…SAST). The span at 6284–6295 (TGSTRGVRTTGS) shows a compositional bias: low complexity. Polar residues-rich tracts occupy residues 6303–6323 (GEFS…TTLT) and 6336–6346 (ESTTSLPQSAK). Residues 6378–6389 (SGTTISSGGSHT) are compositionally biased toward low complexity. Composition is skewed to polar residues over residues 6440–6457 (GRAT…TSQA) and 6470–6503 (TTIT…TTYI). Over residues 6507–6523 (GTTRGGLATATTGAFSG) the composition is skewed to low complexity. Positions 6560-6571 (TTFTSGGSHTEA) are enriched in polar residues. The segment covering 6581-6597 (TGTESRAATTRAAPGTT) has biased composition (low complexity). Residues 6599–6608 (VPGSSNTGAT) show a composition bias toward polar residues. The span at 6612–6628 (GGSATTRGRITTATTGA) shows a compositional bias: low complexity. Polar residues-rich tracts occupy residues 6669–6680 (RITSGGSYTATT) and 6689–6698 (APGSSNTGAT). The span at 6707–6718 (TRGRITTATTGA) shows a compositional bias: low complexity. The span at 6752 to 6766 (TTLTGDRSSTGSESR) shows a compositional bias: polar residues. Residues 6767-6781 (TATTGVAPGTTVAPG) are compositionally biased toward low complexity. Positions 6794-6817 (SGTTNIGRATGATTSIVGSDTSQA) are enriched in polar residues. A compositionally biased stretch (low complexity) spans 6827 to 6842 (SPGASSTSQSSRPGTS). Over residues 6843–6875 (VTPDSSASESETVTTKEFSGTTAISRTSHTGTP) the composition is skewed to polar residues. Over residues 6887–6901 (TATTGVAPGTTVAPG) the composition is skewed to low complexity. 2 stretches are compositionally biased toward polar residues: residues 6902 to 6911 (SSNTEATTSV) and 6953 to 6964 (GTSEVAPSTTVA). The span at 6966–6994 (GSFSTAATTSPGASGTTGVTTTTKTTTSL) shows a compositional bias: low complexity. Polar residues predominate over residues 7006-7041 (SATTGAPGSRTGTAGVPSATTVSPGSSNSEATTSVG). A compositionally biased stretch (low complexity) spans 7045-7074 (KTGAETITEATTSTEGTGTSGTGFKTGTSE). Residues 7085 to 7094 (SFSTAATTSP) show a composition bias toward polar residues. Low complexity predominate over residues 7095 to 7112 (GASGMTGVTTTTKTTTSL). A compositionally biased stretch (polar residues) spans 7143 to 7158 (TRVTPGSSNSEATTSV). Composition is skewed to low complexity over residues 7201–7215 (SGSS…TEGT) and 7250–7276 (SFST…TTSL). Over residues 7293–7311 (SGTTVAPGSSNSEATTSVG) the composition is skewed to polar residues. The segment covering 7379–7397 (TTSTKGTGTSGTGFKTGTS) has biased composition (low complexity). A compositionally biased stretch (polar residues) spans 7403 to 7421 (TTVSPGSFSTATISPGASR). A compositionally biased stretch (low complexity) spans 7422–7435 (TTGAAPAAETTTSL). The segment covering 7465–7483 (SATTIAPGSSNSEATTSLG) has biased composition (polar residues). Gly residues predominate over residues 7525–7537 (PLGGASGTSGGYV). Composition is skewed to polar residues over residues 7544 to 7557 (PTTS…SRTI) and 7571 to 7596 (AGTS…TSPG). A compositionally biased stretch (low complexity) spans 7600–7613 (MTGVRTTSKTTTSL). Polar residues-rich tracts occupy residues 7642–7669 (SSRT…SGTG) and 7698–7708 (SFSTAATTSPG). Low complexity predominate over residues 7715–7732 (TGPTAETTTFLGGSSTTG). The span at 7783-7811 (KNGSMTTALGSQLSSSQTVIPGSSGTISH) shows a compositional bias: polar residues. Residues 7812–7828 (TTVAPGSSVTGTTTGAS) are compositionally biased toward low complexity. Over residues 7830 to 7851 (DQVTGSKTGTTGVALSTTVAPG) the composition is skewed to polar residues. Residues 7852–7861 (SSSTEATTST) are compositionally biased toward low complexity. Over residues 7862-7891 (GVHRTTVVGQKTGATTRGSAKQGTRSTIEA) the composition is skewed to polar residues. Residues 7892-7917 (TTSFRGTGTTGSGMNTGTTGVVSGNT) show a composition bias toward low complexity. Residues 7918–7934 (ISPSSFNTEATSGTSER) are compositionally biased toward polar residues. Residues 7938 to 7952 (GSEIGTTGIVSGTTV) show a composition bias toward low complexity. Composition is skewed to polar residues over residues 7953–7965 (APGS…TTSL), 8020–8040 (SGRS…SGTT), 8048–8081 (TGNT…SISG), and 8110–8120 (ETGVQTGSTLV). Positions 8159–8225 (PVCHGPLGEE…DTCCEIGYCE (67 aa)) constitute a VWFC domain. Disulfide bonds link Cys-8288/Cys-8339, Cys-8306/Cys-8353, Cys-8315/Cys-8369, and Cys-8319/Cys-8371. A CTCK domain is found at 8288 to 8376 (CKNNCRSSLV…TTCSCLDICQ (89 aa)).

As to expression, expressed corneal epithelial cells, conjunctival goblet and epithelial cells and lacrimal gland cells (at protein level). Expressed by mucous cells of the submandibular gland and submucosal gland of the trachea. Expressed by middle ear epithelial cells.

It is found in the secreted. May function in ocular mucus homeostasis. The polypeptide is Mucin-19 (MUC19) (Homo sapiens (Human)).